The sequence spans 265 residues: NAD-capped RNA hydrolase NudC (265 aa).

Substrate is bound at residue Arg76. Zn(2+)-binding residues include Cys106, Cys109, Cys124, and Cys127. Tyr132 contacts substrate. Positions 133–256 constitute a Nudix hydrolase domain; sequence PRISPAMMVL…SIAHRLIRHA (124 aa). Residues Ala166, Glu182, and Glu186 each contribute to the a divalent metal cation site. Residues 167–188 carry the Nudix box motif; the sequence is GFVEPGETLEECVHRETWEEVG. 200-207 serves as a coordination point for substrate; sequence QSWPFPHS. Glu227 contributes to the a divalent metal cation binding site. Ala249 is a binding site for substrate.

It belongs to the Nudix hydrolase family. NudC subfamily. Homodimer. The cofactor is Mg(2+). Requires Mn(2+) as cofactor. It depends on Zn(2+) as a cofactor.

It catalyses the reaction a 5'-end NAD(+)-phospho-ribonucleoside in mRNA + H2O = a 5'-end phospho-adenosine-phospho-ribonucleoside in mRNA + beta-nicotinamide D-ribonucleotide + 2 H(+). The enzyme catalyses NAD(+) + H2O = beta-nicotinamide D-ribonucleotide + AMP + 2 H(+). It carries out the reaction NADH + H2O = reduced beta-nicotinamide D-ribonucleotide + AMP + 2 H(+). In terms of biological role, mRNA decapping enzyme that specifically removes the nicotinamide adenine dinucleotide (NAD) cap from a subset of mRNAs by hydrolyzing the diphosphate linkage to produce nicotinamide mononucleotide (NMN) and 5' monophosphate mRNA. The NAD-cap is present at the 5'-end of some mRNAs and stabilizes RNA against 5'-processing. Has preference for mRNAs with a 5'-end purine. Catalyzes the hydrolysis of a broad range of dinucleotide pyrophosphates. This chain is NAD-capped RNA hydrolase NudC, found in Chromobacterium violaceum (strain ATCC 12472 / DSM 30191 / JCM 1249 / CCUG 213 / NBRC 12614 / NCIMB 9131 / NCTC 9757 / MK).